The chain runs to 350 residues: Anthranilate phosphoribosyltransferase (350 aa).

Residues Gly81, 84–85, Thr89, 91–94, 109–117, and Ser121 contribute to the 5-phospho-alpha-D-ribose 1-diphosphate site; these read GD, NIST, and KHGGRSVSS. Gly81 contributes to the anthranilate binding site. Residue Ser93 participates in Mg(2+) binding. Arg167 contributes to the anthranilate binding site. Positions 230 and 231 each coordinate Mg(2+).

Belongs to the anthranilate phosphoribosyltransferase family. Homodimer. Mg(2+) is required as a cofactor.

The catalysed reaction is N-(5-phospho-beta-D-ribosyl)anthranilate + diphosphate = 5-phospho-alpha-D-ribose 1-diphosphate + anthranilate. It functions in the pathway amino-acid biosynthesis; L-tryptophan biosynthesis; L-tryptophan from chorismate: step 2/5. Functionally, catalyzes the transfer of the phosphoribosyl group of 5-phosphorylribose-1-pyrophosphate (PRPP) to anthranilate to yield N-(5'-phosphoribosyl)-anthranilate (PRA). The polypeptide is Anthranilate phosphoribosyltransferase (Nitrosospira multiformis (strain ATCC 25196 / NCIMB 11849 / C 71)).